We begin with the raw amino-acid sequence, 128 residues long: Glycine cleavage system H protein 2 (128 aa).

Residues 24–105 (TVTVGISDHA…PYSAWIFKVK (82 aa)) form the Lipoyl-binding domain. At Lys-65 the chain carries N6-lipoyllysine.

It belongs to the GcvH family. The glycine cleavage system is composed of four proteins: P, T, L and H. It depends on (R)-lipoate as a cofactor.

Its function is as follows. The glycine cleavage system catalyzes the degradation of glycine. The H protein shuttles the methylamine group of glycine from the P protein to the T protein. This Pseudomonas syringae pv. tomato (strain ATCC BAA-871 / DC3000) protein is Glycine cleavage system H protein 2.